The following is a 346-amino-acid chain: Cytochrome c551 peroxidase (346 aa).

Residues 1-23 form the signal peptide; the sequence is MQSSQLLPLGSLLLSFATPLAQA. 8 residues coordinate heme c: Cys74, Cys77, His78, Cys220, Cys223, His224, His284, and Met298.

Heme c is required as a cofactor. Post-translationally, binds 2 heme groups per subunit. Sequencing of the whole protein indicates about 20% starts on Val-247.

The protein resides in the periplasm. The enzyme catalyses 2 Fe(II)-[cytochrome c] + H2O2 + 2 H(+) = 2 Fe(III)-[cytochrome c] + 2 H2O. Catalyzes the peroxidative oxidation of azurin and cytochrome c551. Likely to provide protection against toxic peroxides. This chain is Cytochrome c551 peroxidase (ccpA), found in Pseudomonas aeruginosa (strain ATCC 15692 / DSM 22644 / CIP 104116 / JCM 14847 / LMG 12228 / 1C / PRS 101 / PAO1).